Consider the following 757-residue polypeptide: GTPase-activating protein GYP7 (757 aa).

The region spanning glycine 395–tyrosine 640 is the Rab-GAP TBC domain. Positions glycine 482 to phenylalanine 507 are disordered. The segment covering threonine 498–phenylalanine 507 has biased composition (acidic residues).

In terms of biological role, most effectively accelerate the intrinsic GTPase activity of YPT7. It is also active, but to a lesser extent, on YPT31, YPT32 and YPT1. YPT6 and SEC4. This chain is GTPase-activating protein GYP7 (GYP7), found in Debaryomyces hansenii (strain ATCC 36239 / CBS 767 / BCRC 21394 / JCM 1990 / NBRC 0083 / IGC 2968) (Yeast).